We begin with the raw amino-acid sequence, 87 residues long: UPF0473 protein Daud_0916 (87 aa).

The protein belongs to the UPF0473 family.

The chain is UPF0473 protein Daud_0916 from Desulforudis audaxviator (strain MP104C).